A 435-amino-acid chain; its full sequence is Gamma-glutamyl phosphate reductase (435 aa).

This sequence belongs to the gamma-glutamyl phosphate reductase family.

The protein localises to the cytoplasm. It carries out the reaction L-glutamate 5-semialdehyde + phosphate + NADP(+) = L-glutamyl 5-phosphate + NADPH + H(+). It participates in amino-acid biosynthesis; L-proline biosynthesis; L-glutamate 5-semialdehyde from L-glutamate: step 2/2. Functionally, catalyzes the NADPH-dependent reduction of L-glutamate 5-phosphate into L-glutamate 5-semialdehyde and phosphate. The product spontaneously undergoes cyclization to form 1-pyrroline-5-carboxylate. This chain is Gamma-glutamyl phosphate reductase, found in Xylella fastidiosa (strain M12).